A 238-amino-acid polypeptide reads, in one-letter code: Cysteine-rich venom protein pseudechetoxin-like (238 aa).

The signal sequence occupies residues 1–19; sequence MIAFIVLLSLAAVLQQSSG. Residues 20-28 constitute a propeptide that is removed on maturation; that stretch reads TVDFASESS. Residues 38-164 form the SCP domain; that stretch reads VDKHNDLRRS…STKYLYVCQY (127 aa). Intrachain disulfides connect C75/C153, C92/C165, C148/C162, C184/C191, C187/C196, C200/C233, C209/C227, and C218/C231. One can recognise a ShKT domain in the interval 200–233; the sequence is CKHNDDLSNCKPLAKKSKCQTEWIKSKCPATCFC.

Belongs to the CRISP family. Expressed by the venom gland.

Its subcellular location is the secreted. In terms of biological role, blocks olfactory (CNGA2) and retinal (CNGA1) CNG channel currents. Does not affect neither depolarization- nor caffeine-induced contraction of smooth muscle. The chain is Cysteine-rich venom protein pseudechetoxin-like from Oxyuranus microlepidotus (Inland taipan).